A 245-amino-acid polypeptide reads, in one-letter code: Glucan endo-1,3-beta-glucosidase (245 aa).

The signal sequence occupies residues 1-23 (MMKTLVVVLSLSLTILSFGGAHA). 8 disulfides stabilise this stretch: C32–C244, C80–C90, C95–C102, C150–C233, C155–C216, C163–C179, C183–C192, and C193–C203.

This sequence belongs to the thaumatin family. As to expression, abundantly expressed in ripening fruit.

The protein resides in the secreted. It catalyses the reaction Hydrolysis of (1-&gt;3)-beta-D-glucosidic linkages in (1-&gt;3)-beta-D-glucans.. This chain is Glucan endo-1,3-beta-glucosidase, found in Prunus avium (Cherry).